The sequence spans 472 residues: Uronate isomerase (472 aa).

The protein belongs to the metallo-dependent hydrolases superfamily. Uronate isomerase family.

It carries out the reaction D-glucuronate = D-fructuronate. The enzyme catalyses aldehydo-D-galacturonate = keto-D-tagaturonate. It functions in the pathway carbohydrate metabolism; pentose and glucuronate interconversion. This is Uronate isomerase from Xanthomonas axonopodis pv. citri (strain 306).